A 355-amino-acid chain; its full sequence is MSKDYGTPPENWREVYDEICKMKAKVVAPVDVQGCHTLGERNDPKKFRFQTLVALMLSSQTKDIVLGPTMRNLKEKLAGGLCLEDIQNIDEVSLNKLIEKVGFHNRKTIYLKQMARILSEKFQGDIPDTVEDLMTLPGVGPKMGYLCMSIAWNKTVGIGVDVHVHRICNLLHWCNTKTEEQTRAALQSWLPKELWFELNHTLVGFGQTICLPRGRRCDMCTLSSKGLCPSAFKEKSGITITKRKVKTIKRVKKRPASESPPLSPLSLPTDDLYYQSIEDKSLIKLEDLDPVDSISHMNEPLKKEPAADIDVDQKPPVAFHSTTKETRSLRRSKRVAKKSSQYFSQQSLQDIEDLV.

Positions 44 to 50 match the Nuclear localization signal motif; that stretch reads PKKFRFQ. The 28-residue stretch at 122–149 folds into the HhH domain; sequence FQGDIPDTVEDLMTLPGVGPKMGYLCMS. K142 serves as the catalytic Nucleophile; for N-glycosylase activity. [4Fe-4S] cluster is bound by residues C210, C217, C220, and C228. Residues 252–255 carry the Nuclear localization signal motif; it reads KKRP. The tract at residues 303-355 is disordered; sequence KEPAADIDVDQKPPVAFHSTTKETRSLRRSKRVAKKSSQYFSQQSLQDIEDLV. A compositionally biased stretch (polar residues) spans 338-349; sequence KSSQYFSQQSLQ.

Belongs to the Nth/MutY family. [4Fe-4S] cluster is required as a cofactor.

The protein resides in the nucleus. Its subcellular location is the mitochondrion. The catalysed reaction is 2'-deoxyribonucleotide-(2'-deoxyribose 5'-phosphate)-2'-deoxyribonucleotide-DNA = a 3'-end 2'-deoxyribonucleotide-(2,3-dehydro-2,3-deoxyribose 5'-phosphate)-DNA + a 5'-end 5'-phospho-2'-deoxyribonucleoside-DNA + H(+). Its function is as follows. Bifunctional DNA N-glycosylase with associated apurinic/apyrimidinic (AP) lyase function that catalyzes the first step in base excision repair (BER), the primary repair pathway for the repair of oxidative DNA damage. The DNA N-glycosylase activity releases the damaged DNA base from DNA by cleaving the N-glycosidic bond, leaving an AP site. The AP-lyase activity cleaves the phosphodiester bond 3' to the AP site by a beta-elimination. Primarily recognizes and repairs oxidative base damage of pyrimidines. Also has 8-oxo-7,8-dihydroguanine (8-oxoG) DNA glycosylase activity. Also involved in the repair of 7-methylguanine lesions, although it cannot directly repair alkylated DNA bases. Probably does so via excision of methylformamidopyrimidine (mFapy) lesions, a spontaneous processing product of 7-methylguanine. The protein is Endonuclease III homolog (nth1) of Schizosaccharomyces pombe (strain 972 / ATCC 24843) (Fission yeast).